Reading from the N-terminus, the 208-residue chain is Imidazole glycerol phosphate synthase subunit HisH (208 aa).

In terms of domain architecture, Glutamine amidotransferase type-1 spans 1–206; that stretch reads MIVIIDYDTG…KEVIRSCKSS (206 aa). The active-site Nucleophile is the cysteine 79. Residues histidine 181 and glutamate 183 contribute to the active site.

As to quaternary structure, heterodimer of HisH and HisF.

The protein localises to the cytoplasm. The enzyme catalyses 5-[(5-phospho-1-deoxy-D-ribulos-1-ylimino)methylamino]-1-(5-phospho-beta-D-ribosyl)imidazole-4-carboxamide + L-glutamine = D-erythro-1-(imidazol-4-yl)glycerol 3-phosphate + 5-amino-1-(5-phospho-beta-D-ribosyl)imidazole-4-carboxamide + L-glutamate + H(+). The catalysed reaction is L-glutamine + H2O = L-glutamate + NH4(+). It functions in the pathway amino-acid biosynthesis; L-histidine biosynthesis; L-histidine from 5-phospho-alpha-D-ribose 1-diphosphate: step 5/9. In terms of biological role, IGPS catalyzes the conversion of PRFAR and glutamine to IGP, AICAR and glutamate. The HisH subunit catalyzes the hydrolysis of glutamine to glutamate and ammonia as part of the synthesis of IGP and AICAR. The resulting ammonia molecule is channeled to the active site of HisF. In Listeria monocytogenes serotype 4b (strain CLIP80459), this protein is Imidazole glycerol phosphate synthase subunit HisH.